A 276-amino-acid chain; its full sequence is MASAELDYSIEIPDQPCWSQKNRQGGKEAGKQQPVVILLGWGGCRDKNLAKYSAIYHKRGCIVIRYTAPWHMVFFSESLGIPSLRVIAQKLLELLFDYEIEREPLLFHVFSNAGVMLYRYVLELLQTHQRFRHLHVVGTIFDSGPGDSNLIGALRALATILERRPAVLRLLLLAAFALVVILFHFLLAPFTALFHTHFYDRLQDSGSCWPELYLYSRADKVVSARDVERMVEARLAHQVMVRGVDFVSSAHVSHLRDYPTYYTSLCVDFMHNCVQC.

A helical transmembrane segment spans residues 170–190; the sequence is LLLLAAFALVVILFHFLLAPF.

The protein belongs to the TMEM53 family. Expressed in liver (at protein level).

Its subcellular location is the nucleus outer membrane. In terms of biological role, negatively regulates bone morphogenetic protein (BMP) signaling in osteoblast lineage cells by blocking cytoplasm-nucleus translocation of phosphorylated SMAD1/5/9 proteins. This Mus musculus (Mouse) protein is Transmembrane protein 53 (Tmem53).